A 107-amino-acid polypeptide reads, in one-letter code: Thioredoxin-1 (107 aa).

The region spanning 2–106 (ASVRTMNDYH…LTNMMAKLVK (105 aa)) is the Thioredoxin domain. Active-site nucleophile residues include Cys-31 and Cys-34. A disulfide bond links Cys-31 and Cys-34.

It belongs to the thioredoxin family. Ovary specific. Expressed present in the nurse cells from stage 9 of ovary development and is transported into the oocyte. Expressed throughout oogenesis.

The protein resides in the nucleus. In terms of biological role, participates in various redox reactions through the reversible oxidation of its active center dithiol to a disulfide and catalyzes dithiol-disulfide exchange reactions. As a reducing substrate of peroxiredoxin 1, thioredoxin 2 is preferred over thioredoxin 1. Required for female meiosis and early embryonic development. This chain is Thioredoxin-1 (dhd), found in Drosophila melanogaster (Fruit fly).